We begin with the raw amino-acid sequence, 244 residues long: Large ribosomal subunit protein uL2 (244 aa).

Over residues 1–12 (MGKRILVQRRGR) the composition is skewed to basic residues. Disordered regions lie at residues 1–26 (MGKRILVQRRGRGGSQFRSPSWKRDG) and 193–225 (AMSPYAHPHGGGSHQKGGTPVPKTAPPGQKVGF).

This sequence belongs to the universal ribosomal protein uL2 family. In terms of assembly, part of the 50S ribosomal subunit. Forms a bridge to the 30S subunit in the 70S ribosome.

Its function is as follows. One of the primary rRNA binding proteins. Required for association of the 30S and 50S subunits to form the 70S ribosome, for tRNA binding and peptide bond formation. It has been suggested to have peptidyltransferase activity; this is somewhat controversial. Makes several contacts with the 16S rRNA in the 70S ribosome. The sequence is that of Large ribosomal subunit protein uL2 from Pyrobaculum calidifontis (strain DSM 21063 / JCM 11548 / VA1).